A 305-amino-acid chain; its full sequence is uncharacterized protein (305 aa).

The protein belongs to the ADP-ribosylglycohydrolase family.

This is an uncharacterized protein from Archaeoglobus fulgidus (strain ATCC 49558 / DSM 4304 / JCM 9628 / NBRC 100126 / VC-16).